The following is a 140-amino-acid chain: Large-conductance mechanosensitive channel (140 aa).

A run of 2 helical transmembrane segments spans residues valine 16 to leucine 36 and isoleucine 84 to isoleucine 104.

It belongs to the MscL family. Homopentamer.

It localises to the cell inner membrane. In terms of biological role, channel that opens in response to stretch forces in the membrane lipid bilayer. May participate in the regulation of osmotic pressure changes within the cell. This Xanthomonas oryzae pv. oryzae (strain MAFF 311018) protein is Large-conductance mechanosensitive channel.